The primary structure comprises 1464 residues: Glutamate receptor ionotropic, NMDA 2A (1464 aa).

The first 22 residues, 1–22 (MGRVGYWTLLVLPALLVWRGPA), serve as a signal peptide directing secretion. Residues 23–556 (PSAAAEKGPP…SAFLEPFSAS (534 aa)) lie on the Extracellular side of the membrane. H44 contacts Zn(2+). N-linked (GlcNAc...) asparagine glycosylation occurs at N75. Cysteines 87 and 320 form a disulfide. Zn(2+) is bound by residues H128, E266, and D282. N-linked (GlcNAc...) asparagine glycosylation is found at N340, N380, N443, and N444. 2 cysteine pairs are disulfide-bonded: C429-C455 and C436-C456. L-glutamate is bound by residues S511, T513, and R518. N541 carries N-linked (GlcNAc...) asparagine glycosylation. A helical membrane pass occupies residues 557 to 576 (VWVMMFVMLLIVSAIAVFVF). Residues 577 to 600 (EYFSPVGYNRNLAKGKAPHGPSFT) are Cytoplasmic-facing. The segment at 599-620 (FTIGKAIWLLWGLVFNNSVPVQ) is pore-forming. The discontinuously helical intramembrane region spans 601–615 (IGKAIWLLWGLVFNN). Topologically, residues 616 to 625 (SVPVQNPKGT) are cytoplasmic. A helical membrane pass occupies residues 626 to 646 (TSKIMVSVWAFFAVIFLASYT). Residues 647–814 (ANLAAFMIQE…NEVMSSQLDI (168 aa)) lie on the Extracellular side of the membrane. A glycan (N-linked (GlcNAc...) asparagine) is linked at N687. L-glutamate is bound by residues S689, T690, and D731. Residues C745 and C800 are joined by a disulfide bond. Residues 815-835 (DNMAGVFYMLAAAMALSLITF) traverse the membrane as a helical segment. Residues 836 to 1464 (IWEHLFYWKL…KKMPSIESDV (629 aa)) lie on the Cytoplasmic side of the membrane. Phosphoserine is present on residues S882, S890, and S929. 2 stretches are compositionally biased toward polar residues: residues 997 to 1010 (EVAV…NSRP) and 1023 to 1032 (QDSLSQNPVS). The disordered stretch occupies residues 997-1083 (EVAVSTESKA…PDNSKNHKTK (87 aa)). S1025 carries the phosphoserine modification. 2 stretches are compositionally biased toward basic and acidic residues: residues 1033-1043 (QRDEATAENRT) and 1052-1061 (LPEEMAHSDI). 2 positions are modified to phosphoserine: S1059 and S1062. The segment covering 1070–1083 (CHREPDNSKNHKTK) has biased composition (basic and acidic residues). 2 positions are modified to phosphoserine: S1198 and S1291. Residues 1335-1372 (KLSGKKSSLFPQGLEDSKRSKSLLPDHTSDNPFLHSHR) are disordered. Positions 1462-1464 (SDV) match the PDZ-binding motif.

This sequence belongs to the glutamate-gated ion channel (TC 1.A.10.1) family. NR2A/GRIN2A subfamily. As to quaternary structure, heterotetramer. Forms heterotetrameric channels composed of two GluN1/zeta subunits (GRIN1), and two identical GluN2/epsilon subunits (GRIN2A, GRIN2B, GRIN2C or GRIN2D) or GluN3 subunits (GRIN3A or GRIN3B) (in vitro). Can also form heterotetrameric channels that contain at least two GluN1 subunits and at least two different GluN2 subunits (or a combination of one GluN2 and one GluN3 subunits) (in vitro). In vivo, the subunit composition may depend on the expression levels of the different subunits. Found in a complex with GRIN1, GRIN3A and PPP2CB. Found in a complex with GRIN1 and GRIN3B. Interacts with AIP1. Interacts with HIP1 and NETO1. Interacts with SNX27 (via PDZ domain); the interaction is required for recycling to the plasma membrane when endocytosed and prevent degradation in lysosomes. Interacts with PDZ domains of PATJ and DLG4. Interacts with LRFN2. Interacts with RPH3A and DLG4; this ternary complex regulates NMDA receptor composition at postsynaptic membranes. Interacts with SORCS2. Interacts with ARC; preventing ARC oligomerization. Interacts (via the extreme C-terminus) with FRMPD2 (the second PDZ domain); the interaction is direct and is likely to promote NMDAR-mediated neural signal transmission. GRIN2A binds FRMPD2 with lower affinity than GRIN2B.

It is found in the cell projection. The protein resides in the dendritic spine. Its subcellular location is the cell membrane. It localises to the synapse. The protein localises to the postsynaptic cell membrane. It is found in the cytoplasmic vesicle membrane. It carries out the reaction Ca(2+)(in) = Ca(2+)(out). The catalysed reaction is Na(+)(in) = Na(+)(out). The enzyme catalyses K(+)(in) = K(+)(out). Its activity is regulated as follows. NMDA glutamate receptor activity is inhibited by endogenous Mg(2+) in a voltage-dependent manner. NMDA glutamate receptor activity is inhibited by endogenous Zn(2+). NMDA glutamate receptor activity is inhibited by endogenous protons. Functionally, component of N-methyl-D-aspartate (NMDA) receptors (NMDARs) that function as heterotetrameric, ligand-gated cation channels with high calcium permeability and voltage-dependent block by Mg(2+). NMDARs participate in synaptic plasticity for learning and memory formation by contributing to the slow phase of excitatory postsynaptic current, long-term synaptic potentiation, and learning. Channel activation requires binding of the neurotransmitter L-glutamate to the GluN2 subunit, glycine or D-serine binding to the GluN1 subunit, plus membrane depolarization to eliminate channel inhibition by Mg(2+). NMDARs mediate simultaneously the potasium efflux and the influx of calcium and sodium. Each GluN2 subunit confers differential attributes to channel properties, including activation, deactivation and desensitization kinetics, pH sensitivity, Ca2(+) permeability, and binding to allosteric modulators. Participates in the synaptic plasticity regulation through activation by the L-glutamate releaseed by BEST1, into the synaptic cleft, upon F2R/PAR-1 activation in astrocyte. The protein is Glutamate receptor ionotropic, NMDA 2A of Homo sapiens (Human).